A 59-amino-acid polypeptide reads, in one-letter code: Potassium channel toxin alpha-KTx 15.4 (59 aa).

An N-terminal signal peptide occupies residues Met-1–Cys-22. A Pyrrolidone carboxylic acid modification is found at Gln-23. Cystine bridges form between Cys-30–Cys-50, Cys-35–Cys-55, and Cys-39–Cys-57.

In terms of tissue distribution, expressed by the venom gland.

It is found in the secreted. Functionally, blocker of A-type voltage-gated potassium channels of cerebellar granular cells. May also inhibit Kv4/KCND when coexpressed with DPP6 or DPP10. The occlusion of the outer entry of the K(+) conducting pore is partially reversible and affects both open and closed channels. It shares the same target in rat brain than BmTX3 (AC Q8I0L5) and AmmTX3 (AC P60208). The sequence is that of Potassium channel toxin alpha-KTx 15.4 from Androctonus australis (Sahara scorpion).